We begin with the raw amino-acid sequence, 162 residues long: Cyanate hydratase (162 aa).

Residues R103, E106, and S129 contribute to the active site.

Belongs to the cyanase family.

It catalyses the reaction cyanate + hydrogencarbonate + 3 H(+) = NH4(+) + 2 CO2. Functionally, catalyzes the reaction of cyanate with bicarbonate to produce ammonia and carbon dioxide. The protein is Cyanate hydratase of Phaeosphaeria nodorum (strain SN15 / ATCC MYA-4574 / FGSC 10173) (Glume blotch fungus).